The following is an 884-amino-acid chain: Pyruvate, phosphate dikinase (884 aa).

The N-terminal stretch occupies residues 1-351 (MSTRRVYFFG…LWMLQARAGK (351 aa)). Arginine 99 provides a ligand contact to ATP. Residues 352–408 (RTGFAMVRIAIDMCKEGMLTEEEALLRIDANKINEFLFKRFDPSVKPVVLGKGIPAS) form a linker 1 region. The tract at residues 409–507 (PGAAVGVICF…KFKEGDFISI (99 aa)) is central. Threonine 462 is modified (phosphothreonine; by PDRP1). The active-site Tele-phosphohistidine intermediate is the histidine 464. The linker 2 stretch occupies residues 508-542 (NGTTGEIYNGAVQTIEPGITDDLQTIMDWSDKYRV). Positions 543-884 (LKIRTNADTP…IAAIKARTNQ (342 aa)) are C-terminal. Substrate contacts are provided by arginine 570, arginine 626, glutamate 753, glycine 774, threonine 775, asparagine 776, and aspartate 777. Mg(2+) is bound at residue glutamate 753. Aspartate 777 provides a ligand contact to Mg(2+). The active-site Proton donor is the cysteine 839.

It belongs to the PEP-utilizing enzyme family. Homodimer. Mg(2+) is required as a cofactor. Post-translationally, phosphorylation of Thr-462 in the dark inactivates the enzyme. Dephosphorylation upon light stimulation reactivates the enzyme.

It carries out the reaction pyruvate + phosphate + ATP = phosphoenolpyruvate + AMP + diphosphate + H(+). With respect to regulation, activated by light-induced dephosphorylation. Inhibited by dark-induced phosphorylation. Both reactions are catalyzed by PDRP1. In terms of biological role, catalyzes the reversible phosphorylation of pyruvate and phosphate. The protein is Pyruvate, phosphate dikinase of Giardia intestinalis (Giardia lamblia).